The chain runs to 631 residues: Eukaryotic translation initiation factor 3 subunit L (631 aa).

The region spanning 335 to 526 (TFVSVLIFFI…AETTLLDGER (192 aa)) is the PCI domain. The segment at 571 to 631 (KSAPLPVRKP…PKSRQARIAA (61 aa)) is disordered. Low complexity predominate over residues 580 to 612 (PASSSAPAPATTAAPISKSGESAAPAPAEAPAA).

The protein belongs to the eIF-3 subunit L family. As to quaternary structure, component of the eukaryotic translation initiation factor 3 (eIF-3) complex.

The protein resides in the cytoplasm. In terms of biological role, component of the eukaryotic translation initiation factor 3 (eIF-3) complex, which is involved in protein synthesis of a specialized repertoire of mRNAs and, together with other initiation factors, stimulates binding of mRNA and methionyl-tRNAi to the 40S ribosome. The eIF-3 complex specifically targets and initiates translation of a subset of mRNAs involved in cell proliferation. This is Eukaryotic translation initiation factor 3 subunit L from Cryptococcus neoformans var. neoformans serotype D (strain B-3501A) (Filobasidiella neoformans).